Here is a 296-residue protein sequence, read N- to C-terminus: Acetylglutamate kinase (296 aa).

Substrate is bound by residues 67–68 (GG), R89, and N194.

It belongs to the acetylglutamate kinase family. ArgB subfamily.

It is found in the cytoplasm. The enzyme catalyses N-acetyl-L-glutamate + ATP = N-acetyl-L-glutamyl 5-phosphate + ADP. Its pathway is amino-acid biosynthesis; L-arginine biosynthesis; N(2)-acetyl-L-ornithine from L-glutamate: step 2/4. In terms of biological role, catalyzes the ATP-dependent phosphorylation of N-acetyl-L-glutamate. This is Acetylglutamate kinase from Brucella abortus (strain S19).